The sequence spans 381 residues: Guanine nucleotide-binding protein G(olf) subunit alpha (381 aa).

The segment at 1–25 is disordered; the sequence is MGCLGNSSKTAEDQGVDEKERREAN. A lipid anchor (N-palmitoyl glycine) is attached at Gly-2. Cys-3 carries S-palmitoyl cysteine lipidation. The span at 10-25 shows a compositional bias: basic and acidic residues; the sequence is TAEDQGVDEKERREAN. A G-alpha domain is found at 41-381; it reads ATHRLLLLGA…RMHLKQYELL (341 aa). Positions 44-57 are G1 motif; it reads RLLLLGAGESGKST. The GTP site is built by Glu-52, Ser-53, Gly-54, Lys-55, Ser-56, and Thr-57. Mg(2+) is bound at residue Ser-56. Residue Thr-178 is modified to Phosphothreonine. Positions 183–191 are G2 motif; that stretch reads DLLRCRVLT. GTP is bound by residues Leu-185, Arg-186, and Thr-191. The Mg(2+) site is built by Thr-191 and Asp-210. The tract at residues 206 to 215 is G3 motif; sequence FHMFDVGGQR. Gly-213, Asn-279, Lys-280, Asp-282, and Ala-353 together coordinate GTP. The interval 275–282 is G4 motif; sequence ILFLNKQD. The interval 351–356 is G5 motif; sequence TCAVDT.

The protein belongs to the G-alpha family. G(s) subfamily. In terms of assembly, g proteins are composed of 3 units; alpha, beta and gamma. The alpha chain contains the guanine nucleotide binding site. Interacts with GAS2L2. Interacts (GDP-bound form) with RIC8B (via C-terminus); promoting GNAL folding and association with the plasma membrane.

Its subcellular location is the cell membrane. The enzyme catalyses GTP + H2O = GDP + phosphate + H(+). In terms of biological role, guanine nucleotide-binding protein (G protein) involved as transducer in olfactory signal transduction controlled by G protein-coupled receptors (GPCRs). Contains the guanine nucleotide binding site and alternates between an active, GTP-bound state and an inactive, GDP-bound state. Signaling by an activated GPCR promotes GDP release and GTP binding. The alpha subunit has a low GTPase activity that converts bound GTP to GDP, thereby terminating the signal. Both GDP release and GTP hydrolysis are modulated by numerous regulatory proteins. GNAL/G(olf) alpha specifically mediates olfactory signal transduction within the olfactory neuroepithelium and the basal ganglia following GPCRs activation. Acts by promoting the specific activation of adenylyl cyclase ADCY3, resulting in increased levels of the signaling molecule cAMP. The chain is Guanine nucleotide-binding protein G(olf) subunit alpha from Rattus norvegicus (Rat).